A 106-amino-acid chain; its full sequence is uncharacterized protein (106 aa).

This is an uncharacterized protein from Archaeoglobus fulgidus (strain ATCC 49558 / DSM 4304 / JCM 9628 / NBRC 100126 / VC-16).